A 124-amino-acid chain; its full sequence is Fluoride-specific ion channel FluC (124 aa).

4 helical membrane-spanning segments follow: residues 3–23 (YLLV…INTV), 36–56 (TFFI…YFAF), 66–86 (LFLM…SLDA), and 100–120 (LYVL…LALI). Residues Gly74 and Thr77 each coordinate Na(+).

This sequence belongs to the fluoride channel Fluc/FEX (TC 1.A.43) family.

It localises to the cell inner membrane. It carries out the reaction fluoride(in) = fluoride(out). Na(+) is not transported, but it plays an essential structural role and its presence is essential for fluoride channel function. Fluoride-specific ion channel. Important for reducing fluoride concentration in the cell, thus reducing its toxicity. This Rhodopseudomonas palustris (strain BisB5) protein is Fluoride-specific ion channel FluC.